The sequence spans 686 residues: DNA ligase (686 aa).

NAD(+) is bound by residues 33 to 37 (DSVYD), 82 to 83 (SL), and Glu122. The active-site N6-AMP-lysine intermediate is Lys124. NAD(+)-binding residues include Arg145, Glu182, Lys300, and Lys324. Positions 418, 421, 436, and 441 each coordinate Zn(2+). The BRCT domain maps to 600–686 (AVSQILAGKK…PTVESGDLHP (87 aa)).

It belongs to the NAD-dependent DNA ligase family. LigA subfamily. Mg(2+) serves as cofactor. It depends on Mn(2+) as a cofactor.

The catalysed reaction is NAD(+) + (deoxyribonucleotide)n-3'-hydroxyl + 5'-phospho-(deoxyribonucleotide)m = (deoxyribonucleotide)n+m + AMP + beta-nicotinamide D-nucleotide.. In terms of biological role, DNA ligase that catalyzes the formation of phosphodiester linkages between 5'-phosphoryl and 3'-hydroxyl groups in double-stranded DNA using NAD as a coenzyme and as the energy source for the reaction. It is essential for DNA replication and repair of damaged DNA. The sequence is that of DNA ligase from Synechococcus sp. (strain JA-2-3B'a(2-13)) (Cyanobacteria bacterium Yellowstone B-Prime).